The sequence spans 381 residues: MSLNMFWFLPTHGDGHYLGTEEGSRPVDHGYLQQIAQAADRLGYTGVLIPTGRSCEDAWLVAASMIPVTQRLKFLVALRPSVTSPTVAARQAATLDRLSNGRALFNLVTGSDPQELAGDGVFLDHSERYEASAEFTQVWRRLLLGETVDFNGKHIHVRGAKLLFPPIQQPYPPLYFGGSSDVAQELAAEQVDLYLTWGEPPELVKEKIEHVRAKAAAHGRKIRFGVRLHVIVRETNDEAWQAAERLISRLDDETIAKAQAAFARTDSVGQQRMAALHNGKRDNLEISPNLWAGVGLVRGGAGTALVGDGPTVAARINEYAALGIDSFVLSGYPHLEEAYRVGELLFPHLDVAIPEIPQPQPLNPQGEAVANDFIPRNVAQS.

The protein belongs to the SsuD family. Homotetramer.

The enzyme catalyses an alkanesulfonate + FMNH2 + O2 = an aldehyde + FMN + sulfite + H2O + 2 H(+). Its function is as follows. Catalyzes the desulfonation of aliphatic sulfonates. This chain is Alkanesulfonate monooxygenase, found in Escherichia coli O1:K1 / APEC.